Reading from the N-terminus, the 346-residue chain is Inositol 2-dehydrogenase/D-chiro-inositol 3-dehydrogenase (346 aa).

The protein belongs to the Gfo/Idh/MocA family. Homotetramer.

It catalyses the reaction myo-inositol + NAD(+) = scyllo-inosose + NADH + H(+). It carries out the reaction 1D-chiro-inositol + NAD(+) = scyllo-inosine + NADH + H(+). It participates in polyol metabolism; myo-inositol degradation into acetyl-CoA; acetyl-CoA from myo-inositol: step 1/7. Its function is as follows. Involved in the oxidation of myo-inositol (MI) and D-chiro-inositol (DCI) to 2-keto-myo-inositol (2KMI or 2-inosose) and 1-keto-D-chiro-inositol (1KDCI), respectively. This chain is Inositol 2-dehydrogenase/D-chiro-inositol 3-dehydrogenase, found in Lacticaseibacillus casei (Lactobacillus casei).